The chain runs to 58 residues: Small ribosomal subunit protein bS21 (58 aa).

Belongs to the bacterial ribosomal protein bS21 family.

The protein is Small ribosomal subunit protein bS21 of Lactobacillus acidophilus (strain ATCC 700396 / NCK56 / N2 / NCFM).